Here is a 266-residue protein sequence, read N- to C-terminus: F-actin-capping protein subunit beta (266 aa).

It belongs to the F-actin-capping protein beta subunit family. Component of the F-actin capping complex, composed of a heterodimer of an alpha and a beta subunit.

Its subcellular location is the cytoplasm. It is found in the cytoskeleton. The protein resides in the actin patch. In terms of biological role, F-actin-capping proteins bind in a Ca(2+)-independent manner to the fast growing ends of actin filaments (barbed end) thereby blocking the exchange of subunits at these ends. Unlike other capping proteins (such as gelsolin and severin), these proteins do not sever actin filaments. This is F-actin-capping protein subunit beta (cap2) from Aspergillus oryzae (strain ATCC 42149 / RIB 40) (Yellow koji mold).